Reading from the N-terminus, the 382-residue chain is Queuine tRNA-ribosyltransferase (382 aa).

The Proton acceptor role is filled by Asp93. Residues 93–97 (DSGGF), Asp147, Gln191, and Gly218 each bind substrate. The segment at 249–255 (GVGKPED) is RNA binding. Catalysis depends on Asp268, which acts as the Nucleophile. The tract at residues 273–277 (TRNAR) is RNA binding; important for wobble base 34 recognition. Zn(2+) contacts are provided by Cys306, Cys308, Cys311, and His337.

Belongs to the queuine tRNA-ribosyltransferase family. In terms of assembly, homodimer. Within each dimer, one monomer is responsible for RNA recognition and catalysis, while the other monomer binds to the replacement base PreQ1. The cofactor is Zn(2+).

It catalyses the reaction 7-aminomethyl-7-carbaguanine + guanosine(34) in tRNA = 7-aminomethyl-7-carbaguanosine(34) in tRNA + guanine. Its pathway is tRNA modification; tRNA-queuosine biosynthesis. Functionally, catalyzes the base-exchange of a guanine (G) residue with the queuine precursor 7-aminomethyl-7-deazaguanine (PreQ1) at position 34 (anticodon wobble position) in tRNAs with GU(N) anticodons (tRNA-Asp, -Asn, -His and -Tyr). Catalysis occurs through a double-displacement mechanism. The nucleophile active site attacks the C1' of nucleotide 34 to detach the guanine base from the RNA, forming a covalent enzyme-RNA intermediate. The proton acceptor active site deprotonates the incoming PreQ1, allowing a nucleophilic attack on the C1' of the ribose to form the product. After dissociation, two additional enzymatic reactions on the tRNA convert PreQ1 to queuine (Q), resulting in the hypermodified nucleoside queuosine (7-(((4,5-cis-dihydroxy-2-cyclopenten-1-yl)amino)methyl)-7-deazaguanosine). This Actinobacillus pleuropneumoniae serotype 5b (strain L20) protein is Queuine tRNA-ribosyltransferase.